The chain runs to 83 residues: Mitochondrial import inner membrane translocase subunit Tim8 (83 aa).

Positions 35–60 (CWDVCFSDYRPPSKMDGKTQTCIQNC) match the Twin CX3C motif motif. 2 disulfides stabilise this stretch: C35-C60 and C39-C56.

The protein belongs to the small Tim family. In terms of assembly, heterohexamer; composed of 3 copies of ddp-1/tim-8 and 3 copies of tin-13/tim-13, named soluble 70 kDa complex. Associates with the TIM22 complex, whose core is composed of tim-22.

It localises to the mitochondrion inner membrane. Functionally, mitochondrial intermembrane chaperone that participates in the import and insertion of some multi-pass transmembrane proteins into the mitochondrial inner membrane. Also required for the transfer of beta-barrel precursors from the TOM complex to the sorting and assembly machinery (SAM complex) of the outer membrane. Acts as a chaperone-like protein that protects the hydrophobic precursors from aggregation and guide them through the mitochondrial intermembrane space. The ddp-1/tim-8-tim-13 complex mediates the import of some proteins while the predominant tim-9/tin-9.1-tim-10/tin-10 70 kDa complex mediates the import of much more proteins. The polypeptide is Mitochondrial import inner membrane translocase subunit Tim8 (Caenorhabditis briggsae).